A 338-amino-acid polypeptide reads, in one-letter code: Histone acetyltransferase SAS2 (338 aa).

Residues Met-1–Lys-15 show a composition bias toward polar residues. Residues Met-1–Ala-31 are disordered. The segment covering Leu-16–Ala-31 has biased composition (basic residues). One can recognise an MYST-type HAT domain in the interval Leu-45–Asp-338. The C2HC MYST-type zinc-finger motif lies at Leu-100–Gln-126. Residue Lys-168 is modified to N6-acetyllysine; by autocatalysis. Acetyl-CoA-binding positions include Ile-209–Ile-211 and Gln-216–Leu-222. Residue Glu-242 is the Proton donor/acceptor of the active site. Residues Ser-246 and Lys-323 each coordinate acetyl-CoA.

Belongs to the MYST (SAS/MOZ) family. In terms of assembly, interacts with CAC1. Component of the SAS complex, at least composed of SAS2, SAS4 and SAS5. These three proteins constitute the core of the complex and are sufficient to acetylate histones. SAS4 is essential for HAT activity of the complex, while SAS5 is required for maxiaml HAT activity. Autoacetylation at Lys-168 is required for proper function.

The protein resides in the cytoplasm. It is found in the nucleus. The catalysed reaction is L-lysyl-[protein] + acetyl-CoA = N(6)-acetyl-L-lysyl-[protein] + CoA + H(+). In terms of biological role, histone acetyltransferase (HAT) subunit of the SAS complex, a multiprotein complex that acetylates 'Lys-16' of histone H4 and 'Lys-14' of histone H3. The SAS complex is however unable to acetylate nucleosomal histones. The complex is involved in transcriptional silencing at telomeres and at HML locus. Also involved in rDNA silencing and G0 control. This chain is Histone acetyltransferase SAS2 (SAS2), found in Saccharomyces cerevisiae (strain ATCC 204508 / S288c) (Baker's yeast).